The primary structure comprises 717 residues: Proline-rich receptor-like protein kinase PERK2 (717 aa).

Residues 1-197 (MSSAPPPGGT…GSLSPPPPAS (197 aa)) show a composition bias toward pro residues. The disordered stretch occupies residues 1–221 (MSSAPPPGGT…GSSPPAQSSK (221 aa)). The Extracellular segment spans residues 1 to 228 (MSSAPPPGGT…SSKELSKGAM (228 aa)). Over residues 198–220 (PSGGRSPSTPSTTPGSSPPAQSS) the composition is skewed to low complexity. Residues 229–249 (VGIAIGGGFVLLVALALIFFL) form a helical membrane-spanning segment. The Cytoplasmic segment spans residues 250 to 717 (CKKKRRRDNE…NIKRPGQGYG (468 aa)). A disordered region spans residues 258-323 (NEAPPAPIDG…YDSNYSDQSV (66 aa)). Over residues 289–303 (VPPPKSPSSAPPRPP) the composition is skewed to pro residues. Residues 307 to 322 (SSGSSGDYDSNYSDQS) show a composition bias toward low complexity. The Protein kinase domain occupies 354–631 (FSEANLLGQG…QVARVLEGNI (278 aa)). Residues 360–368 (LGQGGFGYV) and Lys382 contribute to the ATP site. The active-site Proton acceptor is Asp478. Composition is skewed to polar residues over residues 632 to 644 (SPSD…TPGH) and 692 to 705 (SWSS…QGKA). Disordered stretches follow at residues 632–665 (SPSD…DNEG) and 690–717 (YPSW…QGYG).

The protein belongs to the protein kinase superfamily. Ser/Thr protein kinase family. In terms of tissue distribution, mostly expressed in inflorescence bolt, flower buds and siliques, and, to a lower extent, in roots, seedlings and leaves.

It is found in the cell membrane. It carries out the reaction L-seryl-[protein] + ATP = O-phospho-L-seryl-[protein] + ADP + H(+). The catalysed reaction is L-threonyl-[protein] + ATP = O-phospho-L-threonyl-[protein] + ADP + H(+). The protein is Proline-rich receptor-like protein kinase PERK2 (PERK2) of Arabidopsis thaliana (Mouse-ear cress).